The following is a 648-amino-acid chain: Copper methylamine oxidase (648 aa).

The propeptide occupies 1–9 (MTLNAESEA). 299–310 (AFDSGEYNIGNM) is a substrate binding site. The Proton acceptor role is filled by D301. C320 and C346 are disulfide-bonded. Residue 382 to 387 (VANYEY) coordinates substrate. Y385 functions as the Schiff-base intermediate with substrate; via topaquinone in the catalytic mechanism. Y385 is modified (2',4',5'-topaquinone). Positions 436 and 438 each coordinate Cu cation. Mn(2+) contacts are provided by D445, F446, and D584. Position 595 (H595) interacts with Cu cation. Residues 629 to 648 (PTSTSTTQTGEADTCCHTDK) are disordered.

This sequence belongs to the copper/topaquinone oxidase family. In terms of assembly, homodimer. Requires Cu cation as cofactor. It depends on Zn(2+) as a cofactor. L-topaquinone serves as cofactor. Mn(2+) is required as a cofactor. In terms of processing, topaquinone (TPQ) is generated by copper-dependent autoxidation of a specific tyrosyl residue.

It carries out the reaction a primary methyl amine + O2 + H2O = an aldehyde + H2O2 + NH4(+). In Arthrobacter sp. (strain P1), this protein is Copper methylamine oxidase (maoII).